The primary structure comprises 165 residues: Regulator of ribonuclease activity A (165 aa).

It belongs to the RraA family. In terms of assembly, homotrimer. Binds to both RNA-binding sites in the C-terminal region of Rne and to RhlB.

The protein resides in the cytoplasm. Globally modulates RNA abundance by binding to RNase E (Rne) and regulating its endonucleolytic activity. Can modulate Rne action in a substrate-dependent manner by altering the composition of the degradosome. Modulates RNA-binding and helicase activities of the degradosome. In Actinobacillus pleuropneumoniae serotype 5b (strain L20), this protein is Regulator of ribonuclease activity A.